The following is a 430-amino-acid chain: NADH-quinone oxidoreductase subunit D 1 (430 aa).

Residues 1 to 36 (MSEAKGVGGIDPRATPGSAGAGERPPMGTVSRAGDG) are disordered.

This sequence belongs to the complex I 49 kDa subunit family. In terms of assembly, NDH-1 is composed of 14 different subunits. Subunits NuoB, C, D, E, F, and G constitute the peripheral sector of the complex.

The protein resides in the cell inner membrane. The catalysed reaction is a quinone + NADH + 5 H(+)(in) = a quinol + NAD(+) + 4 H(+)(out). In terms of biological role, NDH-1 shuttles electrons from NADH, via FMN and iron-sulfur (Fe-S) centers, to quinones in the respiratory chain. The immediate electron acceptor for the enzyme in this species is believed to be ubiquinone. Couples the redox reaction to proton translocation (for every two electrons transferred, four hydrogen ions are translocated across the cytoplasmic membrane), and thus conserves the redox energy in a proton gradient. This Anaeromyxobacter dehalogenans (strain 2CP-C) protein is NADH-quinone oxidoreductase subunit D 1.